The primary structure comprises 131 residues: Small ribosomal subunit protein bS6 (131 aa).

The segment at 96-131 (VTEASPMAKAKDERDSRRGPAGDRSYDEANAEEIAE) is disordered. Residues 104 to 122 (KAKDERDSRRGPAGDRSYD) show a composition bias toward basic and acidic residues.

The protein belongs to the bacterial ribosomal protein bS6 family.

In terms of biological role, binds together with bS18 to 16S ribosomal RNA. This chain is Small ribosomal subunit protein bS6, found in Shewanella sp. (strain ANA-3).